We begin with the raw amino-acid sequence, 297 residues long: uncharacterized protein (297 aa).

Belongs to the glycosyltransferase 2 family.

This is an uncharacterized protein from Mycoplasma genitalium (strain ATCC 33530 / DSM 19775 / NCTC 10195 / G37) (Mycoplasmoides genitalium).